A 389-amino-acid polypeptide reads, in one-letter code: Phospho-N-acetylmuramoyl-pentapeptide-transferase (389 aa).

A run of 10 helical transmembrane segments spans residues 25-45 (RAVMATVTALLIGLAAGPWVI), 73-93 (TMGGVLILIGIFVSCMLWADL), 97-117 (FIWIVMIVTFGFGAVGWVDDY), 135-155 (FWQTLIGLFAAIYLAFSVSEI), 190-210 (VSYPLGMMGFIILSYLVIVGS), 222-242 (GLVIMPVILVGAALGAFAYVM), 258-278 (GAGELMIFCGAMGGAGLAFLW), 286-306 (VFMGDVGALALGGALGTIAVI), 311-331 (IVLFVMGGIFVAETVSVMMQV), and 366-386 (QVVVRFWIITILLVLIGLSSL).

Belongs to the glycosyltransferase 4 family. MraY subfamily. It depends on Mg(2+) as a cofactor.

The protein resides in the cell inner membrane. The enzyme catalyses UDP-N-acetyl-alpha-D-muramoyl-L-alanyl-gamma-D-glutamyl-meso-2,6-diaminopimeloyl-D-alanyl-D-alanine + di-trans,octa-cis-undecaprenyl phosphate = di-trans,octa-cis-undecaprenyl diphospho-N-acetyl-alpha-D-muramoyl-L-alanyl-D-glutamyl-meso-2,6-diaminopimeloyl-D-alanyl-D-alanine + UMP. It functions in the pathway cell wall biogenesis; peptidoglycan biosynthesis. Its function is as follows. Catalyzes the initial step of the lipid cycle reactions in the biosynthesis of the cell wall peptidoglycan: transfers peptidoglycan precursor phospho-MurNAc-pentapeptide from UDP-MurNAc-pentapeptide onto the lipid carrier undecaprenyl phosphate, yielding undecaprenyl-pyrophosphoryl-MurNAc-pentapeptide, known as lipid I. The sequence is that of Phospho-N-acetylmuramoyl-pentapeptide-transferase from Polynucleobacter asymbioticus (strain DSM 18221 / CIP 109841 / QLW-P1DMWA-1) (Polynucleobacter necessarius subsp. asymbioticus).